Here is a 196-residue protein sequence, read N- to C-terminus: MNIDSDIFKIQSNNVLPSRGKILISEPFLRDATFGRSVVLLIDHTEEGSMGLIINKQLPIFVNDIIKEFKYIENIPLYKGGPIATDTLFYLHTLADIPGAIPISKGLYLNGDFDEIKKYILQGNKVDRYIRFFLGYSGWESEQLSTELKENTWLVSKEENAYLMNGDTKDMWKQALEKLGSKYETWSRFPQVPTFN.

Belongs to the UPF0301 (AlgH) family.

In Bacteroides thetaiotaomicron (strain ATCC 29148 / DSM 2079 / JCM 5827 / CCUG 10774 / NCTC 10582 / VPI-5482 / E50), this protein is UPF0301 protein BT_1078.